The following is a 743-amino-acid chain: Amylovoran biosynthesis protein AmsF (743 aa).

A signal peptide spans Met1–Ala27.

To R.meliloti ExoP.

The protein localises to the periplasm. The protein operates within glycan metabolism; exopolysaccharide biosynthesis. Involved in the biosynthesis of amylovoran which functions as a virulence factor. May be involved in the polymerization or late modification of the repeating units. In Erwinia amylovora (Fire blight bacteria), this protein is Amylovoran biosynthesis protein AmsF (amsF).